Here is a 252-residue protein sequence, read N- to C-terminus: Isoprenyl transferase (252 aa).

Asp-32 is a catalytic residue. Asp-32 lines the Mg(2+) pocket. Substrate contacts are provided by residues 33–36, Trp-37, Arg-45, His-49, and 77–79; these read GNGR and STE. Residue Asn-80 is the Proton acceptor of the active site. Residues Trp-81, Arg-83, Arg-200, and 206–208 contribute to the substrate site; that span reads RLS. Glu-219 provides a ligand contact to Mg(2+).

The protein belongs to the UPP synthase family. Homodimer. It depends on Mg(2+) as a cofactor.

Its function is as follows. Catalyzes the condensation of isopentenyl diphosphate (IPP) with allylic pyrophosphates generating different type of terpenoids. The protein is Isoprenyl transferase of Oceanobacillus iheyensis (strain DSM 14371 / CIP 107618 / JCM 11309 / KCTC 3954 / HTE831).